The primary structure comprises 177 residues: Embryogenesis-like protein (177 aa).

Residues 98 to 118 (VDEINLKFAEAREEIEMAMDA) adopt a coiled-coil conformation.

As to quaternary structure, interacts with HAG1/GCN5. In terms of tissue distribution, expressed in flowers, leaves, stems and siliques.

Its subcellular location is the nucleus. In terms of biological role, activates gene expression by recruiting HAG1/GCN5 and triggering subsequent histone H3 acetylation of target genes promoters. This is Embryogenesis-like protein from Arabidopsis thaliana (Mouse-ear cress).